The sequence spans 207 residues: LexA repressor (207 aa).

Positions 28–48 (VREIGEAVGLASSSTVHGHLA) form a DNA-binding region, H-T-H motif. Residues Ser-129 and Lys-167 each act as for autocatalytic cleavage activity in the active site.

It belongs to the peptidase S24 family. Homodimer.

The catalysed reaction is Hydrolysis of Ala-|-Gly bond in repressor LexA.. In terms of biological role, represses a number of genes involved in the response to DNA damage (SOS response), including recA and lexA. In the presence of single-stranded DNA, RecA interacts with LexA causing an autocatalytic cleavage which disrupts the DNA-binding part of LexA, leading to derepression of the SOS regulon and eventually DNA repair. The sequence is that of LexA repressor from Geobacillus kaustophilus (strain HTA426).